The primary structure comprises 346 residues: S-adenosylmethionine:tRNA ribosyltransferase-isomerase (346 aa).

The protein belongs to the QueA family. As to quaternary structure, monomer.

It localises to the cytoplasm. It catalyses the reaction 7-aminomethyl-7-carbaguanosine(34) in tRNA + S-adenosyl-L-methionine = epoxyqueuosine(34) in tRNA + adenine + L-methionine + 2 H(+). The protein operates within tRNA modification; tRNA-queuosine biosynthesis. Its function is as follows. Transfers and isomerizes the ribose moiety from AdoMet to the 7-aminomethyl group of 7-deazaguanine (preQ1-tRNA) to give epoxyqueuosine (oQ-tRNA). This chain is S-adenosylmethionine:tRNA ribosyltransferase-isomerase, found in Neisseria meningitidis serogroup C (strain 053442).